Consider the following 585-residue polypeptide: A-type ATP synthase subunit A (585 aa).

231 to 238 lines the ATP pocket; sequence GPFGSGKT.

It belongs to the ATPase alpha/beta chains family. Has multiple subunits with at least A(3), B(3), C, D, E, F, H, I and proteolipid K(x).

It localises to the cell membrane. It catalyses the reaction ATP + H2O + 4 H(+)(in) = ADP + phosphate + 5 H(+)(out). Functionally, component of the A-type ATP synthase that produces ATP from ADP in the presence of a proton gradient across the membrane. The A chain is the catalytic subunit. This Thermococcus sibiricus (strain DSM 12597 / MM 739) protein is A-type ATP synthase subunit A.